We begin with the raw amino-acid sequence, 71 residues long: SRY-related protein LG28 (71 aa).

Positions 1 to 68 (VKRPMNAFMV…KHMADYPDYK (68 aa)) form a DNA-binding region, HMG box.

The protein resides in the nucleus. This Eublepharis macularius (Leopard gecko) protein is SRY-related protein LG28.